Reading from the N-terminus, the 396-residue chain is S-arrestin (396 aa).

Residues 375–386 are compositionally biased toward basic and acidic residues; the sequence is ARDPLKGELQAE. The segment at 375–396 is disordered; that stretch reads ARDPLKGELQAEEKEEEEDDEK. A compositionally biased stretch (acidic residues) spans 387–396; it reads EKEEEEDDEK.

This sequence belongs to the arrestin family. In terms of assembly, interacts with RHO (via the phosphorylated C-terminus).

Its subcellular location is the cell projection. It is found in the cilium. The protein localises to the photoreceptor outer segment. It localises to the membrane. Its function is as follows. Binds to photoactivated, phosphorylated RHO and terminates RHO signaling via G-proteins by competing with G-proteins for the same binding site on RHO. May play a role in preventing light-dependent degeneration of retinal photoreceptor cells. The chain is S-arrestin (sag) from Xenopus laevis (African clawed frog).